A 159-amino-acid polypeptide reads, in one-letter code: Ribosome maturation factor RimP (159 aa).

This sequence belongs to the RimP family.

The protein localises to the cytoplasm. Its function is as follows. Required for maturation of 30S ribosomal subunits. This Streptococcus pneumoniae serotype 19F (strain G54) protein is Ribosome maturation factor RimP.